Reading from the N-terminus, the 105-residue chain is Serine protease inhibitor Kazal-type 6 (105 aa).

Positions 1–23 are cleaved as a signal peptide; the sequence is MKVAGVFLLLSLALLCFFSGAFS. A Pyrrolidone carboxylic acid modification is found at Gln-24. One can recognise a Kazal-like domain in the interval 49–105; it reads RLFQINCGEFRDPKVFCTRESDPLCGSDGQTYGNKCAFCKALEKSSGKINLKHRGKC. Cystine bridges form between Cys-55-Cys-87, Cys-65-Cys-84, and Cys-73-Cys-105.

As to expression, expressed in the upper epidermis and in skin appendages.

The protein resides in the secreted. In terms of biological role, serine protease inhibitor selective for kallikreins. Efficiently inhibits KLK5 and human KLK2, KLK4, KLK5, KLK6, KLK7, KLK12, KLK13 and KLK14. Doesn't inhibit human KLK1 and KLK8. The chain is Serine protease inhibitor Kazal-type 6 (Spink6) from Mus musculus (Mouse).